We begin with the raw amino-acid sequence, 427 residues long: Flotillin-1 (427 aa).

3 positions are modified to phosphoserine: serine 19, serine 163, and serine 385. The residue at position 387 (threonine 387) is a Phosphothreonine.

This sequence belongs to the band 7/mec-2 family. Flotillin subfamily. As to quaternary structure, heterooligomeric complex of flotillin-1 and flotillin-2 and caveolin-1 and caveolin-2. Interacts with ECPAS.

Its subcellular location is the cell membrane. It is found in the endosome. The protein localises to the membrane. It localises to the caveola. The protein resides in the melanosome. Its subcellular location is the membrane raft. In terms of biological role, may act as a scaffolding protein within caveolar membranes, functionally participating in formation of caveolae or caveolae-like vesicles. This is Flotillin-1 (FLOT1) from Sus scrofa (Pig).